The following is a 279-amino-acid chain: MSGGYPALELSAEDLRLMLAAHVHVGETNMNFQMSTYVHGRTKDNFHIIKLDKTWEKILLSARAIAAIDTASDVFAIGSRPFSQRAVLKFANYTGATAMAGRFTPGAFTNQKQSCFREPRLLVVSDPLSDHQAVMEASSVNVPLIALCNTDSPLTRVDIVIPCNNKSTHSIAVVWWFLAREVRRIRGEDTRLQQWSVLPDLFLYRDPNEEEQNVEDPEDARLEPVIPGADAEAAETWGVEPSMPVGSLGDMGIAAPGYGPVGGTAGGWSNLDADPTETW.

It belongs to the universal ribosomal protein uS2 family. Component of the small ribosomal subunit. Mature ribosomes consist of a small (40S) and a large (60S) subunit. The 40S subunit contains about 33 different proteins and 1 molecule of RNA (18S). The 60S subunit contains about 49 different proteins and 3 molecules of RNA (28S, 5.8S and 5S). Interacts with ribosomal protein S21.

It is found in the cytoplasm. Required for the assembly and/or stability of the 40S ribosomal subunit. Required for the processing of the 20S rRNA-precursor to mature 18S rRNA in a late step of the maturation of 40S ribosomal subunits. The protein is Small ribosomal subunit protein uS2 of Schistosoma japonicum (Blood fluke).